Reading from the N-terminus, the 472-residue chain is Tyrosine--tRNA ligase, mitochondrial (472 aa).

Position 72 (Tyr-72) interacts with L-tyrosine. An ATP-binding site is contributed by Asp-76. Positions 77-86 (PTGDSLHVGH) match the 'HIGH' region motif. Residues Asp-116, Tyr-216, Gln-220, Asp-223, and Gln-242 each coordinate L-tyrosine. Ile-269 and Lys-279 together coordinate ATP. The 'KMSKS' region signature appears at 276–280 (KLGKS). An N6-acetyllysine mark is found at Lys-350 and Lys-362.

This sequence belongs to the class-I aminoacyl-tRNA synthetase family. As to quaternary structure, homodimer.

The protein localises to the mitochondrion matrix. It carries out the reaction tRNA(Tyr) + L-tyrosine + ATP = L-tyrosyl-tRNA(Tyr) + AMP + diphosphate + H(+). Its function is as follows. Catalyzes the attachment of tyrosine to tRNA(Tyr) in a two-step reaction: tyrosine is first activated by ATP to form Tyr-AMP and then transferred to the acceptor end of tRNA(Tyr). This Mus musculus (Mouse) protein is Tyrosine--tRNA ligase, mitochondrial (Yars2).